Consider the following 217-residue polypeptide: MKRHANRIGEEFSQTVQFIKSETTLKQKKTKIDVQNVYGLDRNTKNLEKRDIQFLENDKLDLNSHENEGEKTKTETVPTRKQFPKVGEFNSAIHGLSSESVLRTCFRVGEVLAVFRMKRRDVCIIVEFFAKVRSAKKVGNVILYYFEDAFRGQKSPAIFAKYYSCCEISPLLTKPATMIRVVGIVSHAEKILKVIHIASSDLDELWDTYNMVLYETL.

In terms of biological role, has a role in meiosis. The chain is Meiotically up-regulated gene 37 protein (mug37) from Schizosaccharomyces pombe (strain 972 / ATCC 24843) (Fission yeast).